Consider the following 514-residue polypeptide: Protein nucleotidyltransferase YdiU (514 aa).

Gly111, Gly113, Arg114, Lys134, Asp146, Gly147, Arg197, and Arg204 together coordinate ATP. Asp276 (proton acceptor) is an active-site residue. Asn277 and Asp286 together coordinate Mg(2+). Residue Asp286 participates in ATP binding.

Belongs to the SELO family. It depends on Mg(2+) as a cofactor. Mn(2+) is required as a cofactor.

The enzyme catalyses L-seryl-[protein] + ATP = 3-O-(5'-adenylyl)-L-seryl-[protein] + diphosphate. It carries out the reaction L-threonyl-[protein] + ATP = 3-O-(5'-adenylyl)-L-threonyl-[protein] + diphosphate. The catalysed reaction is L-tyrosyl-[protein] + ATP = O-(5'-adenylyl)-L-tyrosyl-[protein] + diphosphate. It catalyses the reaction L-histidyl-[protein] + UTP = N(tele)-(5'-uridylyl)-L-histidyl-[protein] + diphosphate. The enzyme catalyses L-seryl-[protein] + UTP = O-(5'-uridylyl)-L-seryl-[protein] + diphosphate. It carries out the reaction L-tyrosyl-[protein] + UTP = O-(5'-uridylyl)-L-tyrosyl-[protein] + diphosphate. In terms of biological role, nucleotidyltransferase involved in the post-translational modification of proteins. It can catalyze the addition of adenosine monophosphate (AMP) or uridine monophosphate (UMP) to a protein, resulting in modifications known as AMPylation and UMPylation. The protein is Protein nucleotidyltransferase YdiU of Rhodococcus jostii (strain RHA1).